A 555-amino-acid chain; its full sequence is Formate--tetrahydrofolate ligase (555 aa).

64–71 (TKAGIGKT) contributes to the ATP binding site.

It belongs to the formate--tetrahydrofolate ligase family.

The enzyme catalyses (6S)-5,6,7,8-tetrahydrofolate + formate + ATP = (6R)-10-formyltetrahydrofolate + ADP + phosphate. It participates in one-carbon metabolism; tetrahydrofolate interconversion. This chain is Formate--tetrahydrofolate ligase, found in Phocaeicola vulgatus (strain ATCC 8482 / DSM 1447 / JCM 5826 / CCUG 4940 / NBRC 14291 / NCTC 11154) (Bacteroides vulgatus).